Consider the following 134-residue polypeptide: Ribonuclease VapC11 (134 aa).

One can recognise a PINc domain in the interval 2–126 (ILIDTSAWVE…ADFDVIARIT (125 aa)). The Mg(2+) site is built by Asp-5 and Asp-98.

This sequence belongs to the PINc/VapC protein family. Mg(2+) is required as a cofactor.

Functionally, toxic component of a type II toxin-antitoxin (TA) system. Acts as an RNase. Its toxic effects on cell growth and colony formation are neutralized by coexpression with cognate antitoxin VapB11. The chain is Ribonuclease VapC11 from Mycobacterium tuberculosis (strain CDC 1551 / Oshkosh).